The sequence spans 384 residues: Mitogen-activated protein kinase 8 (384 aa).

The Protein kinase domain occupies 26-321; that stretch reads YQNLRPIGSG…VDEALQHPYI (296 aa). Residues 33-38 and Lys55 contribute to the ATP site; that span reads GSGAQG. The active-site Proton acceptor is Asp151. A Phosphothreonine modification is found at Thr183. Residues 183-185 carry the TXY motif; sequence TPY. Phosphotyrosine is present on Tyr185.

Belongs to the protein kinase superfamily. CMGC Ser/Thr protein kinase family. MAP kinase subfamily. Mg(2+) is required as a cofactor. Post-translationally, dually phosphorylated on Thr-183 and Tyr-185, which activates the enzyme.

It localises to the cytoplasm. It is found in the nucleus. Its subcellular location is the synapse. The enzyme catalyses L-seryl-[protein] + ATP = O-phospho-L-seryl-[protein] + ADP + H(+). It carries out the reaction L-threonyl-[protein] + ATP = O-phospho-L-threonyl-[protein] + ADP + H(+). Its activity is regulated as follows. Activated by threonine and tyrosine phosphorylation. Functionally, responds to activation by environmental stress and pro-inflammatory cytokines by phosphorylating a number of transcription factors, primarily components of AP-1 such as c-Jun and ATF2 and thus regulates AP-1 transcriptional activity. May play a role in the regulation of the circadian clock. In Danio rerio (Zebrafish), this protein is Mitogen-activated protein kinase 8 (mapk8).